Here is a 448-residue protein sequence, read N- to C-terminus: Tubulin alpha chain (448 aa).

Residues Gln-12, Glu-73, Ser-142, Gly-146, Thr-147, Thr-181, Asn-208, and Asn-230 each contribute to the GTP site. Glu-73 contributes to the Mg(2+) binding site. Residue Glu-256 is part of the active site.

This sequence belongs to the tubulin family. In terms of assembly, dimer of alpha and beta chains. A typical microtubule is a hollow water-filled tube with an outer diameter of 25 nm and an inner diameter of 15 nM. Alpha-beta heterodimers associate head-to-tail to form protofilaments running lengthwise along the microtubule wall with the beta-tubulin subunit facing the microtubule plus end conferring a structural polarity. Microtubules usually have 13 protofilaments but different protofilament numbers can be found in some organisms and specialized cells. The cofactor is Mg(2+).

Its subcellular location is the cytoplasm. It localises to the cytoskeleton. It carries out the reaction GTP + H2O = GDP + phosphate + H(+). Functionally, tubulin is the major constituent of microtubules, a cylinder consisting of laterally associated linear protofilaments composed of alpha- and beta-tubulin heterodimers. Microtubules grow by the addition of GTP-tubulin dimers to the microtubule end, where a stabilizing cap forms. Below the cap, tubulin dimers are in GDP-bound state, owing to GTPase activity of alpha-tubulin. This chain is Tubulin alpha chain (TUB1), found in Eremothecium gossypii (strain ATCC 10895 / CBS 109.51 / FGSC 9923 / NRRL Y-1056) (Yeast).